The following is a 546-amino-acid chain: Thermolysin (546 aa).

Positions 1–25 (MNKRAMLGAIGLAFGLMAWPFGASA) are cleaved as a signal peptide. A propeptide spans 26-228 (KEKSMVWNEQ…EAKPGGGQPV (203 aa)) (activation peptide). Asp287, Asp289, Gln291, and Asp368 together coordinate Ca(2+). His372 contacts Zn(2+). The active site involves Glu373. His376 and Glu396 together coordinate Zn(2+). Ca(2+) is bound by residues Glu407, Asn413, Asp415, Glu417, Glu420, Tyr423, Thr424, Ile427, and Asp430. Catalysis depends on His461, which acts as the Proton donor.

It belongs to the peptidase M4 family. Ca(2+) is required as a cofactor. It depends on Zn(2+) as a cofactor.

It localises to the secreted. It carries out the reaction Preferential cleavage: Xaa-|-Leu &gt; Xaa-|-Phe.. Extracellular zinc metalloprotease. The polypeptide is Thermolysin (Alicyclobacillus acidocaldarius subsp. acidocaldarius (Bacillus acidocaldarius)).